The primary structure comprises 2282 residues: Acetyl-CoA carboxylase (2282 aa).

Residues 16-515 (NIEKILIANN…HTGWLDQLIS (500 aa)) enclose the Biotin carboxylation domain. Residues 170–360 (YSECNGVPSE…LPATQLQIAM (191 aa)) form the ATP-grasp domain. 196–253 (AQRVGFPAMIKASEGGGGKGIRKVTSMEDLESSFRQVQNEVPGSPIFFMKLVSNARHL) lines the ATP pocket. Residues Glu319, Glu331, and Asn333 each coordinate Mn(2+). The active site involves Arg335. The 75-residue stretch at 646-720 (FSQEYDPSIL…APGAIIANLE (75 aa)) folds into the Biotinyl-binding domain. The residue at position 687 (Lys687) is an N6-biotinyllysine. Residues 1109–1129 (GSNSGSPTYGSPLIRSISSSG) show a composition bias toward low complexity. The disordered stretch occupies residues 1109 to 1141 (GSNSGSPTYGSPLIRSISSSGGSSGGSGFQISP). One can recognise a CoA carboxyltransferase N-terminal domain in the interval 1495 to 1851 (PYPIMDAVQR…SGGEMVPIIS (357 aa)). Residues 1495–2178 (PYPIMDAVQR…EEDKLKLIDK (684 aa)) are carboxyltransferase. CoA contacts are provided by Arg1761, Lys2068, and Arg2070. In terms of domain architecture, CoA carboxyltransferase C-terminal spans 1852-2178 (PIDSPHRDIE…EEDKLKLIDK (327 aa)).

Biotin serves as cofactor. It depends on Mn(2+) as a cofactor.

It localises to the cytoplasm. The catalysed reaction is hydrogencarbonate + acetyl-CoA + ATP = malonyl-CoA + ADP + phosphate + H(+). It catalyses the reaction N(6)-biotinyl-L-lysyl-[protein] + hydrogencarbonate + ATP = N(6)-carboxybiotinyl-L-lysyl-[protein] + ADP + phosphate + H(+). It functions in the pathway lipid metabolism; malonyl-CoA biosynthesis; malonyl-CoA from acetyl-CoA: step 1/1. In terms of biological role, catalyzes the rate-limiting reaction in the biogenesis of long-chain fatty acids. Carries out three functions: biotin carboxyl carrier protein, biotin carboxylase and carboxyltransferase. The polypeptide is Acetyl-CoA carboxylase (accA) (Dictyostelium discoideum (Social amoeba)).